A 142-amino-acid chain; its full sequence is Large ribosomal subunit protein uL11 (142 aa).

The protein belongs to the universal ribosomal protein uL11 family. In terms of assembly, part of the ribosomal stalk of the 50S ribosomal subunit. Interacts with L10 and the large rRNA to form the base of the stalk. L10 forms an elongated spine to which L12 dimers bind in a sequential fashion forming a multimeric L10(L12)X complex. In terms of processing, one or more lysine residues are methylated.

In terms of biological role, forms part of the ribosomal stalk which helps the ribosome interact with GTP-bound translation factors. The protein is Large ribosomal subunit protein uL11 of Hahella chejuensis (strain KCTC 2396).